A 155-amino-acid polypeptide reads, in one-letter code: uncharacterized protein (155 aa).

The interval 56 to 79 (GEKRPTHRRPYRRTKPYPKRPSML) is disordered. Residues 60 to 73 (PTHRRPYRRTKPYP) are compositionally biased toward basic residues.

This is an uncharacterized protein from Sinorhizobium fredii (strain NBRC 101917 / NGR234).